Reading from the N-terminus, the 343-residue chain is DNA-directed RNA polymerase subunit alpha (343 aa).

Positions 1–239 (MGETVTIQKN…DQLNVFVNFE (239 aa)) are alpha N-terminal domain (alpha-NTD). Residues 255–343 (FNPAFLKKVD…ELAKRFEDHY (89 aa)) form an alpha C-terminal domain (alpha-CTD) region.

The protein belongs to the RNA polymerase alpha chain family. Homodimer. The RNAP catalytic core consists of 2 alpha, 1 beta, 1 beta' and 1 omega subunit. When a sigma factor is associated with the core the holoenzyme is formed, which can initiate transcription.

It catalyses the reaction RNA(n) + a ribonucleoside 5'-triphosphate = RNA(n+1) + diphosphate. Functionally, DNA-dependent RNA polymerase catalyzes the transcription of DNA into RNA using the four ribonucleoside triphosphates as substrates. The chain is DNA-directed RNA polymerase subunit alpha from Bradyrhizobium diazoefficiens (strain JCM 10833 / BCRC 13528 / IAM 13628 / NBRC 14792 / USDA 110).